Reading from the N-terminus, the 441-residue chain is MEQPPGEAAEVREEEEKKEVAEAEGAPELNGGPERSLPSSSYTDLSRSSSPPSLLDQLQMGGDGASCGSLNMECRVCGDKASGFHYGVHACEGCKGFFRRTIRMKLEYEKCERICKIQKKNRNKCQYCRFQKCVALGMSHNAIRFGRMPEAEKRKLVAGLTANEGTQHNPQVADLKAFSKHIYNAYLKNFNMTKKKARGILTGKASHTAPFVIHDIETLWQAEKGLVWKQLVNGLPPYKEISVHVFYRCQCTTVETVRELTEFAKSIPSFSNLFLNDQVTLLKYGVHEAIFAMLASIVNKDGLLVANGTGFVTREFLRSLRKPFSDIIEPKFEFAVKFNALELDDSDLALFIAAIILCGDRPGLINVPQVEAIQDTILRALEFHLQANHPYAQYLFPKLLQKMADLRQLVTEHAQMMQRIKKTETETSLHPLLQEIYKDMY.

Residues 1-58 (MEQPPGEAAEVREEEEKKEVAEAEGAPELNGGPERSLPSSSYTDLSRSSSPPSLLDQL) are disordered. The segment covering 9-21 (AEVREEEEKKEVA) has biased composition (basic and acidic residues). Residues 36-55 (SLPSSSYTDLSRSSSPPSLL) show a composition bias toward low complexity. Residues 70 to 145 (LNMECRVCGD…LGMSHNAIRF (76 aa)) constitute a DNA-binding region (nuclear receptor). 2 NR C4-type zinc fingers span residues 74-94 (CRVCGDKASGFHYGVHACEGC) and 111-133 (CERICKIQKKNRNKCQYCRFQKC). The NR LBD domain maps to 211 to 439 (FVIHDIETLW…HPLLQEIYKD (229 aa)).

Belongs to the nuclear hormone receptor family. NR1 subfamily. Heterodimer with the retinoid X receptor. Interacts (via domain NR LBD) with CRY1 and CRY2 in a ligand-dependent manner. 'Lys-48'-linked polyubiquitinated; leading to proteasomal degradation. Deubiquitinated and stabilized by OTUD3.

The protein localises to the nucleus. In terms of biological role, ligand-activated transcription factor key mediator of energy metabolism in adipose tissues. Receptor that binds peroxisome proliferators such as hypolipidemic drugs and fatty acids. Has a preference for poly-unsaturated fatty acids, such as gamma-linoleic acid and eicosapentanoic acid. Once activated by a ligand, the receptor binds to promoter elements of target genes. Regulates the peroxisomal beta-oxidation pathway of fatty acids. Functions as a transcription activator for the acyl-CoA oxidase gene. Decreases expression of NPC1L1 once activated by a ligand. The polypeptide is Peroxisome proliferator-activated receptor delta (PPARD) (Canis lupus familiaris (Dog)).